The primary structure comprises 117 residues: Gamma-aminobutyric acid receptor-associated protein-like 1 (117 aa).

A lipid anchor (Phosphatidylethanolamine amidated glycine; alternate) is attached at glycine 116. Residue glycine 116 is the site of Phosphatidylserine amidated glycine; alternate attachment. Position 117 (lysine 117) is a propeptide, removed in mature form.

It belongs to the ATG8 family. In terms of assembly, interacts with ATG13, OPRK1, RB1CC1 and ULK1. Interacts with TP53INP1 and TP53INP2. Directly interacts with SQSTM1. Interacts with ATG3, ATG7 and MAP15. Interacts with TECPR2. Interacts with TBC1D5. Interacts with MAPK15. Interacts with TRIM5. Interacts with MEFV and TRIM21. Interacts with WDFY3. Interacts with the reticulophagy receptor TEX264. Interacts with UBA5. Interacts with KBTBD6 and KBTBD7; the interaction is direct. Interacts with reticulophagy regulators RETREG1, RETREG2 and RETREG3. Interacts with IRGM. Interacts with DNM2. Interacts with NCOA4 (via C-terminus). The precursor molecule is cleaved by ATG4 (ATG4A, ATG4B, ATG4C or ATG4D) to expose the glycine at the C-terminus and form the cytosolic form, GABARAPL1-I. The processed form is then activated by APG7L/ATG7, transferred to ATG3 and conjugated to phosphatidylethanolamine (PE) phospholipid to form the membrane-bound form, GABARAPL1-II. During non-canonical autophagy, the processed form is conjugated to phosphatidylserine (PS) phospholipid. ATG4 proteins also mediate the delipidation of PE-conjugated forms required for GABARAPL1 recycling when autophagosomes fuse with lysosomes. In addition, ATG4B and ATG4D mediate delipidation of ATG8 proteins conjugated to PS during non-canonical autophagy. ATG4B constitutes the major protein for proteolytic activation. ATG4D is the main enzyme for delipidation activity.

The protein localises to the cytoplasmic vesicle. It is found in the autophagosome. The protein resides in the cytoplasmic vesicle membrane. Its subcellular location is the cytoplasm. It localises to the cytoskeleton. The protein localises to the endoplasmic reticulum. It is found in the golgi apparatus. Functionally, ubiquitin-like modifier that increases cell-surface expression of kappa-type opioid receptor through facilitating anterograde intracellular trafficking of the receptor. Involved in formation of autophagosomal vacuoles. While LC3s are involved in elongation of the phagophore membrane, the GABARAP/GATE-16 subfamily is essential for a later stage in autophagosome maturation. Through its interaction with the reticulophagy receptor TEX264, participates in the remodeling of subdomains of the endoplasmic reticulum into autophagosomes upon nutrient stress, which then fuse with lysosomes for endoplasmic reticulum turnover. This Pongo abelii (Sumatran orangutan) protein is Gamma-aminobutyric acid receptor-associated protein-like 1.